The primary structure comprises 283 residues: Biotin synthase (283 aa).

Residues 3–232 form the Radical SAM core domain; sequence KISNEIFLCS…NTRLMIAGGR (230 aa). Cysteine 21, cysteine 25, and cysteine 28 together coordinate [4Fe-4S] cluster. 3 residues coordinate [2Fe-2S] cluster: cysteine 65, cysteine 100, and arginine 225.

This sequence belongs to the radical SAM superfamily. Biotin synthase family. As to quaternary structure, homodimer. Requires [4Fe-4S] cluster as cofactor. It depends on [2Fe-2S] cluster as a cofactor.

It catalyses the reaction (4R,5S)-dethiobiotin + (sulfur carrier)-SH + 2 reduced [2Fe-2S]-[ferredoxin] + 2 S-adenosyl-L-methionine = (sulfur carrier)-H + biotin + 2 5'-deoxyadenosine + 2 L-methionine + 2 oxidized [2Fe-2S]-[ferredoxin]. It functions in the pathway cofactor biosynthesis; biotin biosynthesis; biotin from 7,8-diaminononanoate: step 2/2. Catalyzes the conversion of dethiobiotin (DTB) to biotin by the insertion of a sulfur atom into dethiobiotin via a radical-based mechanism. This Helicobacter hepaticus (strain ATCC 51449 / 3B1) protein is Biotin synthase.